A 158-amino-acid polypeptide reads, in one-letter code: Toxin Tse2 (158 aa).

Forms a heterotetramer with Tsi2 consisting of two Tse2 dimers and two Tsi2 dimers. Formation of the complex inactivates Tse2 enzymatic activity.

It localises to the secreted. Its function is as follows. Toxin secreted by the H1 type VI (H1-T6SS) secretion system into the cytoplasm of recipient cells. Acts likely as a NAD-dependent cytotoxin towards both prokaryotic and eukaryotic cells. This chain is Toxin Tse2, found in Pseudomonas aeruginosa (strain ATCC 15692 / DSM 22644 / CIP 104116 / JCM 14847 / LMG 12228 / 1C / PRS 101 / PAO1).